The sequence spans 464 residues: UDP-N-acetylmuramate--L-alanine ligase (464 aa).

112-118 (GTHGKTT) contributes to the ATP binding site.

This sequence belongs to the MurCDEF family.

The protein resides in the cytoplasm. It catalyses the reaction UDP-N-acetyl-alpha-D-muramate + L-alanine + ATP = UDP-N-acetyl-alpha-D-muramoyl-L-alanine + ADP + phosphate + H(+). Its pathway is cell wall biogenesis; peptidoglycan biosynthesis. Functionally, cell wall formation. This chain is UDP-N-acetylmuramate--L-alanine ligase, found in Acidithiobacillus ferrooxidans (strain ATCC 23270 / DSM 14882 / CIP 104768 / NCIMB 8455) (Ferrobacillus ferrooxidans (strain ATCC 23270)).